The following is a 251-amino-acid chain: 1-(5-phosphoribosyl)-5-[(5-phosphoribosylamino)methylideneamino] imidazole-4-carboxamide isomerase (251 aa).

The active-site Proton acceptor is the aspartate 8. Aspartate 131 acts as the Proton donor in catalysis.

This sequence belongs to the HisA/HisF family.

The protein resides in the cytoplasm. It carries out the reaction 1-(5-phospho-beta-D-ribosyl)-5-[(5-phospho-beta-D-ribosylamino)methylideneamino]imidazole-4-carboxamide = 5-[(5-phospho-1-deoxy-D-ribulos-1-ylimino)methylamino]-1-(5-phospho-beta-D-ribosyl)imidazole-4-carboxamide. It participates in amino-acid biosynthesis; L-histidine biosynthesis; L-histidine from 5-phospho-alpha-D-ribose 1-diphosphate: step 4/9. This is 1-(5-phosphoribosyl)-5-[(5-phosphoribosylamino)methylideneamino] imidazole-4-carboxamide isomerase from Azoarcus sp. (strain BH72).